Consider the following 122-residue polypeptide: MIQTESRLEVADNTGAKSVLCIKVLGGSKRRYASVGDIIKVSVKEAAPRGRVKKGEIYSAVVVRTAKGIRRGDGSLVKFDGNAAVLLNAKLEPIGTRIFGPVTRELRTEKFMKIVSLAPEVL.

Belongs to the universal ribosomal protein uL14 family. Part of the 50S ribosomal subunit. Forms a cluster with proteins L3 and L19. In the 70S ribosome, L14 and L19 interact and together make contacts with the 16S rRNA in bridges B5 and B8.

Its function is as follows. Binds to 23S rRNA. Forms part of two intersubunit bridges in the 70S ribosome. This is Large ribosomal subunit protein uL14 from Verminephrobacter eiseniae (strain EF01-2).